Here is a 396-residue protein sequence, read N- to C-terminus: Elongation factor Tu (396 aa).

In terms of domain architecture, tr-type G spans Lys-10–Glu-206. The segment at Gly-19 to Thr-26 is G1. Residue Gly-19 to Thr-26 coordinates GTP. Thr-26 serves as a coordination point for Mg(2+). The segment at Gly-60–Asn-64 is G2. Residues Asp-81 to Gly-84 form a G3 region. GTP contacts are provided by residues Asp-81–His-85 and Asn-136–Asp-139. The tract at residues Asn-136–Asp-139 is G4. A G5 region spans residues Ser-174 to Leu-176.

This sequence belongs to the TRAFAC class translation factor GTPase superfamily. Classic translation factor GTPase family. EF-Tu/EF-1A subfamily. In terms of assembly, monomer.

The protein localises to the cytoplasm. It carries out the reaction GTP + H2O = GDP + phosphate + H(+). GTP hydrolase that promotes the GTP-dependent binding of aminoacyl-tRNA to the A-site of ribosomes during protein biosynthesis. In Azoarcus sp. (strain BH72), this protein is Elongation factor Tu.